A 309-amino-acid polypeptide reads, in one-letter code: 4-hydroxy-3-methylbut-2-enyl diphosphate reductase (309 aa).

Residue cysteine 12 coordinates [4Fe-4S] cluster. (2E)-4-hydroxy-3-methylbut-2-enyl diphosphate contacts are provided by histidine 41 and histidine 74. Residues histidine 41 and histidine 74 each coordinate dimethylallyl diphosphate. Isopentenyl diphosphate is bound by residues histidine 41 and histidine 74. Residue cysteine 96 participates in [4Fe-4S] cluster binding. Histidine 124 is a (2E)-4-hydroxy-3-methylbut-2-enyl diphosphate binding site. Histidine 124 is a dimethylallyl diphosphate binding site. Histidine 124 lines the isopentenyl diphosphate pocket. The Proton donor role is filled by glutamate 126. Threonine 167 provides a ligand contact to (2E)-4-hydroxy-3-methylbut-2-enyl diphosphate. Residue cysteine 197 coordinates [4Fe-4S] cluster. Residues serine 225, serine 226, asparagine 227, and serine 269 each contribute to the (2E)-4-hydroxy-3-methylbut-2-enyl diphosphate site. 4 residues coordinate dimethylallyl diphosphate: serine 225, serine 226, asparagine 227, and serine 269. Serine 225, serine 226, asparagine 227, and serine 269 together coordinate isopentenyl diphosphate.

The protein belongs to the IspH family. The cofactor is [4Fe-4S] cluster.

It carries out the reaction isopentenyl diphosphate + 2 oxidized [2Fe-2S]-[ferredoxin] + H2O = (2E)-4-hydroxy-3-methylbut-2-enyl diphosphate + 2 reduced [2Fe-2S]-[ferredoxin] + 2 H(+). The enzyme catalyses dimethylallyl diphosphate + 2 oxidized [2Fe-2S]-[ferredoxin] + H2O = (2E)-4-hydroxy-3-methylbut-2-enyl diphosphate + 2 reduced [2Fe-2S]-[ferredoxin] + 2 H(+). It participates in isoprenoid biosynthesis; dimethylallyl diphosphate biosynthesis; dimethylallyl diphosphate from (2E)-4-hydroxy-3-methylbutenyl diphosphate: step 1/1. It functions in the pathway isoprenoid biosynthesis; isopentenyl diphosphate biosynthesis via DXP pathway; isopentenyl diphosphate from 1-deoxy-D-xylulose 5-phosphate: step 6/6. Its function is as follows. Catalyzes the conversion of 1-hydroxy-2-methyl-2-(E)-butenyl 4-diphosphate (HMBPP) into a mixture of isopentenyl diphosphate (IPP) and dimethylallyl diphosphate (DMAPP). Acts in the terminal step of the DOXP/MEP pathway for isoprenoid precursor biosynthesis. The sequence is that of 4-hydroxy-3-methylbut-2-enyl diphosphate reductase from Shewanella pealeana (strain ATCC 700345 / ANG-SQ1).